A 489-amino-acid chain; its full sequence is Cytochrome P450 71A26 (489 aa).

Residues 1-21 (MMIMFFLLCSIIFVVTIIIFR) form a helical membrane-spanning segment. Cys-431 provides a ligand contact to heme.

It belongs to the cytochrome P450 family. Requires heme as cofactor.

Its subcellular location is the membrane. The protein is Cytochrome P450 71A26 (CYP71A26) of Arabidopsis thaliana (Mouse-ear cress).